Reading from the N-terminus, the 120-residue chain is MKRTGPTDPNLRRLIRYLRKKSNEEKVKIWKDIAWRLERPRRQRAEVNVSRINRYAKDGDMIVVPGSVLGAGKIEKKVIVAAWKFSETARRKIEEAGGEAITIEELIKRNPKGSGVIIME.

The protein belongs to the eukaryotic ribosomal protein eL18 family.

The protein is Large ribosomal subunit protein eL18 of Pyrococcus abyssi (strain GE5 / Orsay).